Reading from the N-terminus, the 396-residue chain is Ribosomal RNA large subunit methyltransferase I (396 aa).

The PUA domain occupies serine 2–arginine 81.

The protein belongs to the methyltransferase superfamily. RlmI family.

It localises to the cytoplasm. The catalysed reaction is cytidine(1962) in 23S rRNA + S-adenosyl-L-methionine = 5-methylcytidine(1962) in 23S rRNA + S-adenosyl-L-homocysteine + H(+). Its function is as follows. Specifically methylates the cytosine at position 1962 (m5C1962) of 23S rRNA. This is Ribosomal RNA large subunit methyltransferase I from Escherichia coli (strain K12 / MC4100 / BW2952).